Consider the following 146-residue polypeptide: Transmembrane protein 207 (146 aa).

A signal peptide spans 1–29 (MSRSRLFSVTSAISTIGILCLPLFQLVLS). Residues 52–72 (IWILLLLVLVAALLCGAVVLC) traverse the membrane as a helical segment.

Interacts with WWOX. Expressed in some signet-ring cell carcinoma, especially those showing high invasion and metastatic activity (at protein level).

It localises to the membrane. The protein is Transmembrane protein 207 (TMEM207) of Homo sapiens (Human).